A 959-amino-acid chain; its full sequence is Transcription factor 1 (959 aa).

2 C2H2-type zinc fingers span residues 2–24 (VFCT…ILTH) and 30–52 (FKCF…YTVH). A DNA-binding region (zn(2)-C6 fungal-type) is located at residues 79 to 105 (CSNCAKTKTKCDKKFPCSRCASRNLRC). Residues 154 to 226 (PTGHVEESSK…SFPGFDDYNQ (73 aa)) form a disordered region. Over residues 163-178 (KSSSPSGSPTSISHNS) the composition is skewed to low complexity.

The protein localises to the nucleus. Its function is as follows. Elsinochromes biosynthesis cluster-specific transcription factor that positively regulates the expression of cluster genes including RDT1, PKS1, PRF1 and HP1, and subsequent elsinochromes production. The polypeptide is Transcription factor 1 (Elsinoe fawcettii (Citrus scab fungus)).